Consider the following 1045-residue polypeptide: Mitotic deacetylase-associated SANT domain protein (1045 aa).

M1 carries the post-translational modification N-acetylmethionine. Disordered regions lie at residues 1–68 (MNLQ…PPPS) and 99–159 (NSVM…PTYY). The segment covering 132–146 (STWNCHSLSLYSATK) has biased composition (polar residues). A Glycyl lysine isopeptide (Lys-Gly) (interchain with G-Cter in SUMO2) cross-link involves residue K166. The residue at position 193 (R193) is an Asymmetric dimethylarginine. Disordered stretches follow at residues 228–264 (QVFR…QQAA), 276–305 (SMPQ…AHHS), 330–349 (APQP…SRRL), 378–397 (HHWP…HPEA), and 410–441 (LPDG…STGD). Residues 240–264 (VAAFPPQKQQQQQQPQQQQQQQQAA) show a composition bias toward low complexity. Positions 412-425 (DGERLAPNGREREA) are enriched in basic and acidic residues. R447 is subject to Omega-N-methylarginine. S461 is subject to Phosphoserine. The disordered stretch occupies residues 543-563 (QAGGLDEDGKGPEQNPAEHKP). Residues 549 to 563 (EDGKGPEQNPAEHKP) show a composition bias toward basic and acidic residues. K590 participates in a covalent cross-link: Glycyl lysine isopeptide (Lys-Gly) (interchain with G-Cter in SUMO1); alternate. K590 participates in a covalent cross-link: Glycyl lysine isopeptide (Lys-Gly) (interchain with G-Cter in SUMO2); alternate. The residue at position 655 (T655) is a Phosphothreonine. S661 carries the post-translational modification Phosphoserine. The residue at position 704 (T704) is a Phosphothreonine. S709 carries the post-translational modification Phosphoserine. T715 bears the Phosphothreonine mark. The 93-residue stretch at 721–813 (PRINVGSRFQ…ETLNKLLLKK (93 aa)) folds into the ELM2 domain. In terms of domain architecture, SANT spans 828–879 (TGSDQWKMAERKLFNKGIAIYKKDFFLVQKLIQTKTVAQCVEFYYTYKKQVK). Residues 887–1045 (TFGDVDTSDE…NTFPCKKCGR (159 aa)) form a disordered region. Basic and acidic residues-rich tracts occupy residues 894–909 (SDEK…DIKT) and 919–942 (PRRE…RKEG). The residue at position 923 (S923) is a Phosphoserine. Over residues 943–957 (EEEVPEIQEKEEQEE) the composition is skewed to acidic residues. Polar residues predominate over residues 970 to 980 (ATQTLQANESA).

As to quaternary structure, interacts with DNTTIP1. Identified in a histone deacetylase complex that contains DNTTIP1, HDAC1 and MIDEAS; this complex assembles into a tetramer that contains four copies of each protein chain.

The protein resides in the nucleus. The chain is Mitotic deacetylase-associated SANT domain protein from Homo sapiens (Human).